Consider the following 337-residue polypeptide: tRNA N6-adenosine threonylcarbamoyltransferase (337 aa).

Residues histidine 111 and histidine 115 each contribute to the Fe cation site. Substrate is bound by residues 134 to 138 (LVSGG), aspartate 167, glycine 180, and asparagine 272. A Fe cation-binding site is contributed by aspartate 300.

It belongs to the KAE1 / TsaD family. Fe(2+) is required as a cofactor.

The protein resides in the cytoplasm. The enzyme catalyses L-threonylcarbamoyladenylate + adenosine(37) in tRNA = N(6)-L-threonylcarbamoyladenosine(37) in tRNA + AMP + H(+). In terms of biological role, required for the formation of a threonylcarbamoyl group on adenosine at position 37 (t(6)A37) in tRNAs that read codons beginning with adenine. Is involved in the transfer of the threonylcarbamoyl moiety of threonylcarbamoyl-AMP (TC-AMP) to the N6 group of A37, together with TsaE and TsaB. TsaD likely plays a direct catalytic role in this reaction. The chain is tRNA N6-adenosine threonylcarbamoyltransferase from Shewanella woodyi (strain ATCC 51908 / MS32).